A 563-amino-acid polypeptide reads, in one-letter code: NAD-dependent malic enzyme (563 aa).

The active-site Proton donor is Tyr101. Arg154 serves as a coordination point for NAD(+). Catalysis depends on Lys172, which acts as the Proton acceptor. A divalent metal cation-binding residues include Glu243, Asp244, and Asp267. Residues Asp267 and Asn416 each contribute to the NAD(+) site.

Belongs to the malic enzymes family. Homotetramer. The cofactor is Mg(2+). Mn(2+) is required as a cofactor.

It catalyses the reaction (S)-malate + NAD(+) = pyruvate + CO2 + NADH. The catalysed reaction is oxaloacetate + H(+) = pyruvate + CO2. The chain is NAD-dependent malic enzyme from Pseudomonas savastanoi pv. phaseolicola (strain 1448A / Race 6) (Pseudomonas syringae pv. phaseolicola (strain 1448A / Race 6)).